The chain runs to 401 residues: Argininosuccinate synthase (401 aa).

Residue 8–16 participates in ATP binding; the sequence is AYSGGLDTS. Tyr-85 contributes to the L-citrulline binding site. ATP is bound at residue Gly-115. The L-aspartate site is built by Thr-117, Asn-121, and Asp-122. Asn-121 serves as a coordination point for L-citrulline. L-citrulline contacts are provided by Arg-125, Ser-173, Glu-258, and Tyr-270.

This sequence belongs to the argininosuccinate synthase family. Type 1 subfamily. Homotetramer.

Its subcellular location is the cytoplasm. The catalysed reaction is L-citrulline + L-aspartate + ATP = 2-(N(omega)-L-arginino)succinate + AMP + diphosphate + H(+). It participates in amino-acid biosynthesis; L-arginine biosynthesis; L-arginine from L-ornithine and carbamoyl phosphate: step 2/3. The chain is Argininosuccinate synthase from Staphylococcus aureus (strain bovine RF122 / ET3-1).